A 486-amino-acid chain; its full sequence is UDP-N-acetylglucosamine pyrophosphorylase (486 aa).

Positions 109–112 (MAGG) match the Substrate binding motif. UTP is bound by residues 109 to 112 (MAGG), Lys123, Gln199, and Gly226. Asn227 serves as a coordination point for substrate. Position 257 (Asp257) interacts with UTP. The short motif at 309–310 (EY) is the Substrate binding element. A UTP-binding site is contributed by Lys389. Lys421 is a binding site for substrate.

Belongs to the UDPGP type 1 family.

It localises to the cytoplasm. It carries out the reaction N-acetyl-alpha-D-glucosamine 1-phosphate + UTP + H(+) = UDP-N-acetyl-alpha-D-glucosamine + diphosphate. The protein operates within nucleotide-sugar biosynthesis; UDP-N-acetyl-alpha-D-glucosamine biosynthesis; UDP-N-acetyl-alpha-D-glucosamine from N-acetyl-alpha-D-glucosamine 1-phosphate: step 1/1. This is UDP-N-acetylglucosamine pyrophosphorylase (UAP1) from Candida albicans (Yeast).